A 248-amino-acid chain; its full sequence is 23S rRNA (guanosine-2'-O-)-methyltransferase RlmB (248 aa).

3 residues coordinate S-adenosyl-L-methionine: Gly-198, Leu-218, and Leu-227.

This sequence belongs to the class IV-like SAM-binding methyltransferase superfamily. RNA methyltransferase TrmH family. RlmB subfamily.

It is found in the cytoplasm. It catalyses the reaction guanosine(2251) in 23S rRNA + S-adenosyl-L-methionine = 2'-O-methylguanosine(2251) in 23S rRNA + S-adenosyl-L-homocysteine + H(+). Its function is as follows. Specifically methylates the ribose of guanosine 2251 in 23S rRNA. The protein is 23S rRNA (guanosine-2'-O-)-methyltransferase RlmB of Pseudomonas putida (strain ATCC 47054 / DSM 6125 / CFBP 8728 / NCIMB 11950 / KT2440).